Reading from the N-terminus, the 490-residue chain is Lysine--tRNA ligase (490 aa).

2 residues coordinate Mg(2+): E400 and E407.

The protein belongs to the class-II aminoacyl-tRNA synthetase family. In terms of assembly, homodimer. Mg(2+) is required as a cofactor.

It is found in the cytoplasm. It carries out the reaction tRNA(Lys) + L-lysine + ATP = L-lysyl-tRNA(Lys) + AMP + diphosphate. The sequence is that of Lysine--tRNA ligase (lysS) from Mycoplasma genitalium (strain ATCC 33530 / DSM 19775 / NCTC 10195 / G37) (Mycoplasmoides genitalium).